The chain runs to 254 residues: Glutathione S-transferase U12 (254 aa).

The short motif at 19-23 (KKRKK) is the Nuclear localization signal element. The GST N-terminal domain maps to 33 to 114 (TTVKLIGTWA…YVDESWPSDL (82 aa)). Residues 43 to 44 (SP), 71 to 72 (GK), 85 to 86 (KV), and 98 to 99 (ES) each bind glutathione. The GST C-terminal domain maps to 120–252 (LPSERAFARF…EFIEFAKKKF (133 aa)).

Belongs to the GST superfamily. Tau family.

The protein localises to the nucleus. The catalysed reaction is RX + glutathione = an S-substituted glutathione + a halide anion + H(+). Functionally, may be involved in the conjugation of reduced glutathione to a wide number of exogenous and endogenous hydrophobic electrophiles and have a detoxification role against certain herbicides. This chain is Glutathione S-transferase U12 (GSTU12), found in Arabidopsis thaliana (Mouse-ear cress).